A 353-amino-acid chain; its full sequence is UPF0283 membrane protein YcjF (353 aa).

Topologically, residues 1–69 (MTEPLKPRID…LRPKRSLWRK (69 aa)) are periplasmic. A helical membrane pass occupies residues 70-90 (MVMGGLALFGASVVGQGVQWT). Over 91 to 99 (MNAWQTQDW) the chain is Cytoplasmic. Residues 100 to 120 (VALGGCAAGALIIGAGVGSVV) form a helical membrane-spanning segment. Residues 121–212 (TEWRRLWRLR…ARREISRSAA (92 aa)) lie on the Periplasmic side of the membrane. Residues 213–233 (ESTLMIAVSPLALVDMAFIAW) form a helical membrane-spanning segment. The Cytoplasmic segment spans residues 234 to 353 (RNLRLINRIA…LQKGKTPSEK (120 aa)).

The protein belongs to the UPF0283 family.

It is found in the cell inner membrane. This chain is UPF0283 membrane protein YcjF (ycjF), found in Escherichia coli O157:H7.